The sequence spans 397 residues: S-adenosylmethionine:tRNA ribosyltransferase-isomerase (397 aa).

This sequence belongs to the QueA family. Monomer.

Its subcellular location is the cytoplasm. It catalyses the reaction 7-aminomethyl-7-carbaguanosine(34) in tRNA + S-adenosyl-L-methionine = epoxyqueuosine(34) in tRNA + adenine + L-methionine + 2 H(+). Its pathway is tRNA modification; tRNA-queuosine biosynthesis. In terms of biological role, transfers and isomerizes the ribose moiety from AdoMet to the 7-aminomethyl group of 7-deazaguanine (preQ1-tRNA) to give epoxyqueuosine (oQ-tRNA). In Nostoc sp. (strain PCC 7120 / SAG 25.82 / UTEX 2576), this protein is S-adenosylmethionine:tRNA ribosyltransferase-isomerase.